We begin with the raw amino-acid sequence, 148 residues long: Deoxyuridine 5'-triphosphate nucleotidohydrolase (148 aa).

Substrate-binding positions include 67–69 (RSG), asparagine 80, 84–86 (LID), and methionine 94.

This sequence belongs to the dUTPase family. The cofactor is Mg(2+).

It carries out the reaction dUTP + H2O = dUMP + diphosphate + H(+). It participates in pyrimidine metabolism; dUMP biosynthesis; dUMP from dCTP (dUTP route): step 2/2. Its function is as follows. This enzyme is involved in nucleotide metabolism: it produces dUMP, the immediate precursor of thymidine nucleotides and it decreases the intracellular concentration of dUTP so that uracil cannot be incorporated into DNA. The chain is Deoxyuridine 5'-triphosphate nucleotidohydrolase from Paraburkholderia xenovorans (strain LB400).